A 367-amino-acid polypeptide reads, in one-letter code: Anthranilate phosphoribosyltransferase (367 aa).

Low complexity predominate over residues 1-17; the sequence is MVLSSEASSAADHSAAA. A disordered region spans residues 1–22; sequence MVLSSEASSAADHSAAAPIPTS. 5-phospho-alpha-D-ribose 1-diphosphate is bound by residues Gly104, 107 to 108, Thr112, 114 to 117, 132 to 140, and Gly144; these read GD, NLST, and KHGNRAASS. Anthranilate is bound at residue Gly104. Ser116 is a binding site for Mg(2+). Asn135 serves as a coordination point for anthranilate. Arg190 is a binding site for anthranilate. Asp248 and Glu249 together coordinate Mg(2+).

It belongs to the anthranilate phosphoribosyltransferase family. As to quaternary structure, homodimer. It depends on Mg(2+) as a cofactor.

The catalysed reaction is N-(5-phospho-beta-D-ribosyl)anthranilate + diphosphate = 5-phospho-alpha-D-ribose 1-diphosphate + anthranilate. It participates in amino-acid biosynthesis; L-tryptophan biosynthesis; L-tryptophan from chorismate: step 2/5. Catalyzes the transfer of the phosphoribosyl group of 5-phosphorylribose-1-pyrophosphate (PRPP) to anthranilate to yield N-(5'-phosphoribosyl)-anthranilate (PRA). This Mycobacterium ulcerans (strain Agy99) protein is Anthranilate phosphoribosyltransferase.